The following is a 643-amino-acid chain: MVKRNHKFKSGEGAMYYTRKAAMNKLQLNIKDFRQLCILKGIYPREPKHRARAQHGSREMKILYHKKDITFLLHEPIVWTLRDRKIFNRRIKHAAAKQNMNLRDIRLHNYPQLKLDHIVKERYPTFIDAIKELDDCMTLLFMFSTFPATKIITRELTRMSRRLTVEFMHYVIAAQALRKVFISIKGYYFQAEIKGETVTWIVPHYFPYSPHRGEMVDLSIMKSFGDFFTVMAGFINYRLYHSINLVYPPQFAHSLDSDETMGNEQKFVSERIAALNVELLRSDGGNGDTEEPELLEWTGNDEELPHVSQIRQEAQNVNKLKTLFKGLKFFLNREVPREPLVFIIRCFGGKVSWDKTMFVGATFDESDETITHQIVDRPSMEKQHISRDYIQPQWVFDSVNQRRLLPTNKYFMGAVLPPHLSPFTSANARYVPPEELAARKAAEGEEEEETFEPAEVNADHEHISDDEEVQDPENEQEMQDYALMKAFNDERTDSLNSGKKEGADDATDNGKDAAEKKQQQNGDGESDDEDEEEEDDDDGEEEEDVMPKKQKPVSNKPKGMAVRRGTVYRENEAEKKIVDKQEEALRARMVKSRHRKLYSKLVEREKKADKNARLLANKRERIEKQKRAEQMEKQKQQRKQILA.

The BRCT domain maps to 319–412 (KLKTLFKGLK…RLLPTNKYFM (94 aa)). Disordered regions lie at residues 437-475 (AARK…PENE), 492-571 (TDSL…YREN), and 609-643 (DKNA…QILA). Residues 464–475 (SDDEEVQDPENE) are compositionally biased toward acidic residues. Over residues 492-518 (TDSLNSGKKEGADDATDNGKDAAEKKQ) the composition is skewed to basic and acidic residues. Positions 524–544 (GESDDEDEEEEDDDDGEEEED) are enriched in acidic residues. Residues 569–643 (RENEAEKKIV…QKQQRKQILA (75 aa)) adopt a coiled-coil conformation. A compositionally biased stretch (basic and acidic residues) spans 609-635 (DKNARLLANKRERIEKQKRAEQMEKQK).

Belongs to the pescadillo family.

Its subcellular location is the nucleus. It is found in the nucleolus. It localises to the nucleoplasm. In terms of biological role, required for maturation of ribosomal RNAs and formation of the large ribosomal subunit. In Anopheles gambiae (African malaria mosquito), this protein is Pescadillo homolog.